The sequence spans 435 residues: Methylenetetrahydrofolate--tRNA-(uracil-5-)-methyltransferase TrmFO (435 aa).

Residue 9 to 14 (GAGLAG) coordinates FAD.

Belongs to the MnmG family. TrmFO subfamily. FAD is required as a cofactor.

It is found in the cytoplasm. It carries out the reaction uridine(54) in tRNA + (6R)-5,10-methylene-5,6,7,8-tetrahydrofolate + NADH + H(+) = 5-methyluridine(54) in tRNA + (6S)-5,6,7,8-tetrahydrofolate + NAD(+). The catalysed reaction is uridine(54) in tRNA + (6R)-5,10-methylene-5,6,7,8-tetrahydrofolate + NADPH + H(+) = 5-methyluridine(54) in tRNA + (6S)-5,6,7,8-tetrahydrofolate + NADP(+). In terms of biological role, catalyzes the folate-dependent formation of 5-methyl-uridine at position 54 (M-5-U54) in all tRNAs. The polypeptide is Methylenetetrahydrofolate--tRNA-(uracil-5-)-methyltransferase TrmFO (Staphylococcus aureus (strain Newman)).